A 222-amino-acid polypeptide reads, in one-letter code: Ribonuclease S-3 (222 aa).

An N-terminal signal peptide occupies residues 1–22; sequence MFRLQLISAFFILLFSLSPVSA. A disulfide bond links Cys-38 and Cys-44. N-linked (GlcNAc...) asparagine glycosylation is present at Asn-50. His-54 (proton donor) is an active-site residue. Residues His-54, 92–93, 109–110, and 113–114 contribute to the RNA site; these read QM, HE, and RH. Cystine bridges form between Cys-68/Cys-117, Cys-177/Cys-210, and Cys-193/Cys-204. Residue Glu-110 is part of the active site. His-114 functions as the Proton acceptor in the catalytic mechanism.

The protein belongs to the RNase T2 family.

It is found in the secreted. Its subcellular location is the extracellular space. The catalysed reaction is a ribonucleotidyl-ribonucleotide-RNA + H2O = a 3'-end 3'-phospho-ribonucleotide-RNA + a 5'-end dephospho-ribonucleoside-RNA + H(+). In terms of biological role, self-incompatibility (SI) is the inherited ability of a flowering plant to prevent self-fertilization by discriminating between self and non-self pollen during pollination. In many species, self-incompatibility is controlled by the single, multiallelic locus S. This is Ribonuclease S-3 (S3) from Petunia hybrida (Petunia).